The primary structure comprises 383 residues: Glutaminyl-peptide cyclotransferase-like protein (383 aa).

A disordered region spans residues 1–25 (MPSGGRGRPRLQVGERSLLERPSPP). A helical membrane pass occupies residues 35–57 (LLPQLLLALTVASVFYTIWRIWH). A disulfide bond links C168 and C192. D187 lines the Zn(2+) pocket. Residue E226 is the Proton acceptor of the active site. E227 serves as a coordination point for Zn(2+). D270 (proton acceptor) is an active-site residue. H352 provides a ligand contact to Zn(2+).

It belongs to the glutaminyl-peptide cyclotransferase family.

It is found in the golgi apparatus membrane. The catalysed reaction is N-terminal L-glutaminyl-[peptide] = N-terminal 5-oxo-L-prolyl-[peptide] + NH4(+). In terms of biological role, responsible for the biosynthesis of pyroglutamyl peptides. This Bos taurus (Bovine) protein is Glutaminyl-peptide cyclotransferase-like protein (QPCTL).